We begin with the raw amino-acid sequence, 34 residues long: Histone H1, sperm (34 aa).

Residues 1-34 form a disordered region; it reads PASPQKRAASPRRSPKKSPRKSPKKSPRKRSASP. Positions 9 to 34 are enriched in basic residues; that stretch reads ASPRRSPKKSPRKSPKKSPRKRSASP.

The protein belongs to the histone H1/H5 family. In terms of tissue distribution, sperm.

The protein localises to the nucleus. Its subcellular location is the chromosome. In terms of biological role, histones H1 are necessary for the condensation of nucleosome chains into higher-order structures. This chain is Histone H1, sperm, found in Strongylocentrotus purpuratus (Purple sea urchin).